Consider the following 268-residue polypeptide: Movement protein (268 aa).

A disordered region spans residues 218–246; sequence SDVRKGKISSSDRSAPNKNYRNVKDFGGM. Polar residues predominate over residues 225–237; that stretch reads ISSSDRSAPNKNY.

It belongs to the tobamovirus movement protein family. In terms of assembly, binds to host RBCS at the plasmodesmata; this interaction seems required for viral systemic movement. In resistant plants, interacts with host MBP2C at host microtubules; this interaction prevents virus cell to cell movement. In resistant plants, interacts with host resistance (R) protein (e.g. tomato ToMV resistance protein TM-2(2), AC Q71BG9) at the host plasma membrane; this interaction triggers host defense responses leading to programmed cell death.

The protein localises to the host cytoplasm. It is found in the host cytoskeleton. Its subcellular location is the host cell junction. The protein resides in the host plasmodesma. Functionally, transports viral genome to neighboring plant cells directly through plasmosdesmata, without any budding. The movement protein allows efficient cell to cell propagation, by bypassing the host cell wall barrier. Forms a ribonucleoprotein complex with viral RNA. Binds microtubules and modulates microtubule stability. Can bind double-stranded DNA. Triggers host hypersensitive defense reaction in incompatible plants harboring resistance (R) proteins. The sequence is that of Movement protein (MP) from Nicotiana tabacum (Common tobacco).